We begin with the raw amino-acid sequence, 260 residues long: Adenosylcobinamide-GDP ribazoletransferase (260 aa).

A run of 7 helical transmembrane segments spans residues 31–51 (FYFLPLIGGLIAGLVLIPIYF), 57–77 (IEISGFISLLLYLFLTGSIHL), 108–128 (YGTIGLNVFLLLRYINYSTII), 131–151 (AGLLILAGIISRLSGLAVVVF), 173–193 (FFFWLVLVCFLSLFTPEIAAF), 206–226 (LKYLLLPLTAFILTFIIIRIS), and 240–260 (LIVELTELAVLSTSFFINVHL).

It belongs to the CobS family. The cofactor is Mg(2+).

The protein resides in the cell inner membrane. It carries out the reaction alpha-ribazole + adenosylcob(III)inamide-GDP = adenosylcob(III)alamin + GMP + H(+). It catalyses the reaction alpha-ribazole 5'-phosphate + adenosylcob(III)inamide-GDP = adenosylcob(III)alamin 5'-phosphate + GMP + H(+). Its pathway is cofactor biosynthesis; adenosylcobalamin biosynthesis; adenosylcobalamin from cob(II)yrinate a,c-diamide: step 7/7. In terms of biological role, joins adenosylcobinamide-GDP and alpha-ribazole to generate adenosylcobalamin (Ado-cobalamin). Also synthesizes adenosylcobalamin 5'-phosphate from adenosylcobinamide-GDP and alpha-ribazole 5'-phosphate. The polypeptide is Adenosylcobinamide-GDP ribazoletransferase (Treponema denticola (strain ATCC 35405 / DSM 14222 / CIP 103919 / JCM 8153 / KCTC 15104)).